Consider the following 1939-residue polypeptide: Myosin-8 (1939 aa).

The 50-residue stretch at 35-84 (DAKTSVFVAEPKASYVKSTIQSKEGGKVTVKTEGGATLTVREDQVFPMNP) folds into the Myosin N-terminal SH3-like domain. Residues Thr66 and Thr71 each carry the phosphothreonine modification. In terms of domain architecture, Myosin motor spans 88 to 783 (DKIEDMAMMT…LLGLLEEMRD (696 aa)). N6,N6,N6-trimethyllysine is present on Lys132. Residue 181–188 (GESGAGKT) coordinates ATP. Tyr391 bears the Phosphotyrosine mark. A Phosphothreonine modification is found at Thr421. Residue Tyr426 is modified to Phosphotyrosine. Residue Ser627 is modified to Phosphoserine. An actin-binding region spans residues 660 to 682 (LNKLMTNLRSTHPHFVRCIIPNE). At His758 the chain carries Pros-methylhistidine. The segment at 762–776 (KFGHTKVFFKAGLLG) is actin-binding. Residues 783–815 (DEKLSQIITRTQAVCRGFLMRVEYQKMLQRREA) enclose the IQ domain. The stretch at 844–1939 (LLKSAETEKE…REVHTKISAE (1096 aa)) forms a coiled coil. Phosphoserine is present on residues Ser1093, Ser1097, Ser1163, and Ser1238. Position 1242 is a phosphothreonine (Thr1242). Ser1244 is subject to Phosphoserine. A Phosphothreonine modification is found at Thr1256. Ser1262 is subject to Phosphoserine. A phosphothreonine mark is found at Thr1266 and Thr1287. Phosphoserine occurs at positions 1293, 1304, and 1307. Residue Tyr1465 is modified to Phosphotyrosine. Thr1468 carries the phosphothreonine modification. Ser1475 is modified (phosphoserine). Tyr1493 carries the phosphotyrosine modification. A Phosphoserine modification is found at Ser1496. Thr1502 carries the phosphothreonine modification. Position 1515 is a phosphoserine (Ser1515). The residue at position 1518 (Thr1518) is a Phosphothreonine. 6 positions are modified to phosphoserine: Ser1555, Ser1575, Ser1601, Ser1604, Ser1715, and Ser1727. Thr1731 bears the Phosphothreonine mark. Residue Ser1740 is modified to Phosphoserine.

This sequence belongs to the TRAFAC class myosin-kinesin ATPase superfamily. Myosin family. Muscle myosin is a hexameric protein that consists of 2 heavy chain subunits (MHC), 2 alkali light chain subunits (MLC) and 2 regulatory light chain subunits (MLC-2).

It localises to the cytoplasm. Its subcellular location is the myofibril. Muscle contraction. This Canis lupus familiaris (Dog) protein is Myosin-8 (MYH8).